A 2345-amino-acid chain; its full sequence is Nonribisomal peptide synthetase malG (2345 aa).

Residues 226–620 form an adenylation 1 region; that stretch reads FSEQAKKNPT…VGRMGTVVKV (395 aa). One can recognise a Carrier 1 domain in the interval 766–839; it reads TENETLLRLL…EAAGTMISAG (74 aa). Serine 800 carries the O-(pantetheine 4'-phosphoryl)serine modification. The tract at residues 877-1292 is condensation 1; that stretch reads EEIYPSTPLQ…LLCPSDKSKL (416 aa). An adenylation 2 region spans residues 1317–1707; it reads VRSERTAVSA…GRKNREVKLR (391 aa). Positions 1843–1926 constitute a Carrier 2 domain; sequence QPHESTALFV…DIARLIEGVK (84 aa). Residue serine 1885 is modified to O-(pantetheine 4'-phosphoryl)serine. The segment at 1969 to 2256 is reductase (R) domain; it reads GMSVFLTGGT…PRQLNALQSE (288 aa).

Belongs to the NRP synthetase family.

The enzyme catalyses L-proline + L-tryptophan + 2 ATP + NADPH = (S)-3-(indol-3-ylmethyl)-6,7,8,8a-tetrahydropyrrolo[1,2-a]pyrazin-1-one + 2 AMP + 2 diphosphate + NADP(+) + H2O + H(+). In terms of biological role, nonribisomal peptide synthetase; part of the gene cluster that mediates the biosynthesis of malbrancheamide, a dichlorinated fungal indole alkaloid that belongs to a family of natural products containing a characteristic bicyclo[2.2.2]diazaoctane core. The first step of malbrancheamide biosynthesis involves coupling of L-proline and L-tryptophan by malG, a bimodular NRPS, to produce L-Pro-L-Trp aldehyde through reductive offloading. This compound undergoes spontaneous cyclization and dehydration to give a dienamine which is reverse prenylated at C-2 by malE. The other prenyltransferase present in the cluster, malB, displays modest activity, suggesting that may be a redundant gene in the pathway. Subsequently, a [4+2] Diels-Alder cyclo-addition catalyzed by the bifunctional enzyme malC forms the characteristic bicyclo[2.2.2]diazaoctane ring of premalbrancheamid. Finally, the flavin-dependent halogenase malA catalyzes the iterative dichlorination of the indole ring of premalbrancheamide to yield C-9 monochlorinated malbrancheamide B, C-8 monochlorinated isomalbrancheamide B, and dichlorinated malbrancheamide. MalA is also able to brominate premalbrancheamide at C-9 to yield malbrancheamide C, and, to a lesser extend, at C-8 to yield isomalbrancheamide C. Finally, malA can brominate C-9 monochlorinated malbrancheamide B at C-8 to yield malbrancheamide D, or C-8 monochlorinated isomalbrancheamide B at C-9 to produce isomalbrancheamide D. The protein is Nonribisomal peptide synthetase malG of Malbranchea aurantiaca.